The following is a 294-amino-acid chain: Probable cobalamin biosynthesis protein CobD (294 aa).

4 helical membrane-spanning segments follow: residues 52–72, 73–93, 145–165, and 268–288; these read AGLL…IVPF, YAPF…SFAI, DSVV…AVIY, and IYWL…ATGV.

This sequence belongs to the CobD/CbiB family.

It is found in the cell membrane. It functions in the pathway cofactor biosynthesis; adenosylcobalamin biosynthesis. Converts cobyric acid to cobinamide by the addition of aminopropanol on the F carboxylic group. This Thermococcus kodakarensis (strain ATCC BAA-918 / JCM 12380 / KOD1) (Pyrococcus kodakaraensis (strain KOD1)) protein is Probable cobalamin biosynthesis protein CobD.